Reading from the N-terminus, the 407-residue chain is Argininosuccinate synthase (407 aa).

ATP contacts are provided by residues 13-21 and alanine 40; that span reads AYSGGLDTS. The L-citrulline site is built by tyrosine 91 and serine 96. Glycine 121 lines the ATP pocket. Residues threonine 123, asparagine 127, and aspartate 128 each contribute to the L-aspartate site. Asparagine 127 serves as a coordination point for L-citrulline. The L-citrulline site is built by arginine 131, serine 182, serine 191, glutamate 267, and tyrosine 279.

The protein belongs to the argininosuccinate synthase family. Type 1 subfamily. As to quaternary structure, homotetramer.

It localises to the cytoplasm. The enzyme catalyses L-citrulline + L-aspartate + ATP = 2-(N(omega)-L-arginino)succinate + AMP + diphosphate + H(+). It functions in the pathway amino-acid biosynthesis; L-arginine biosynthesis; L-arginine from L-ornithine and carbamoyl phosphate: step 2/3. In Bartonella bacilliformis (strain ATCC 35685 / KC583 / Herrer 020/F12,63), this protein is Argininosuccinate synthase.